The following is a 282-amino-acid chain: Bifunctional protein FolD (282 aa).

Residues 165–167 (NRS), Ser-190, and Ile-231 contribute to the NADP(+) site.

The protein belongs to the tetrahydrofolate dehydrogenase/cyclohydrolase family. As to quaternary structure, homodimer.

The catalysed reaction is (6R)-5,10-methylene-5,6,7,8-tetrahydrofolate + NADP(+) = (6R)-5,10-methenyltetrahydrofolate + NADPH. It carries out the reaction (6R)-5,10-methenyltetrahydrofolate + H2O = (6R)-10-formyltetrahydrofolate + H(+). It participates in one-carbon metabolism; tetrahydrofolate interconversion. In terms of biological role, catalyzes the oxidation of 5,10-methylenetetrahydrofolate to 5,10-methenyltetrahydrofolate and then the hydrolysis of 5,10-methenyltetrahydrofolate to 10-formyltetrahydrofolate. The chain is Bifunctional protein FolD from Clostridium botulinum (strain Okra / Type B1).